Here is a 285-residue protein sequence, read N- to C-terminus: NADPH-dependent 7-cyano-7-deazaguanine reductase (285 aa).

80–82 is a binding site for substrate; sequence VES. Residue 82-83 coordinates NADPH; the sequence is SK. Cys-191 serves as the catalytic Thioimide intermediate. Asp-198 acts as the Proton donor in catalysis. 231-232 contributes to the substrate binding site; it reads HE. 260–261 serves as a coordination point for NADPH; the sequence is RG.

This sequence belongs to the GTP cyclohydrolase I family. QueF type 2 subfamily. As to quaternary structure, homodimer.

The protein resides in the cytoplasm. The catalysed reaction is 7-aminomethyl-7-carbaguanine + 2 NADP(+) = 7-cyano-7-deazaguanine + 2 NADPH + 3 H(+). Its pathway is tRNA modification; tRNA-queuosine biosynthesis. Catalyzes the NADPH-dependent reduction of 7-cyano-7-deazaguanine (preQ0) to 7-aminomethyl-7-deazaguanine (preQ1). In Psychrobacter cryohalolentis (strain ATCC BAA-1226 / DSM 17306 / VKM B-2378 / K5), this protein is NADPH-dependent 7-cyano-7-deazaguanine reductase.